Reading from the N-terminus, the 1371-residue chain is uncharacterized protein (1371 aa).

Residues 1020–1048 (WYLSSSKNTPEPRPDPEPTPEGHDNNLRP) form a disordered region. Basic and acidic residues predominate over residues 1029–1046 (PEPRPDPEPTPEGHDNNL). The Autotransporter domain maps to 1083–1371 (GEPKATSMWM…SAMLGVKYTF (289 aa)).

The protein localises to the cell outer membrane. This is an uncharacterized protein from Escherichia coli (strain K12).